The following is a 188-amino-acid chain: dCTP deaminase (188 aa).

DCTP contacts are provided by residues 111–116 (KSTYAR), 135–137 (TLE), Q156, Y170, and Q180. E137 functions as the Proton donor/acceptor in the catalytic mechanism.

It belongs to the dCTP deaminase family. In terms of assembly, homotrimer.

It catalyses the reaction dCTP + H2O + H(+) = dUTP + NH4(+). It participates in pyrimidine metabolism; dUMP biosynthesis; dUMP from dCTP (dUTP route): step 1/2. Its function is as follows. Catalyzes the deamination of dCTP to dUTP. This is dCTP deaminase from Dechloromonas aromatica (strain RCB).